The chain runs to 96 residues: Probable quinol oxidase subunit 4 (96 aa).

3 consecutive transmembrane segments (helical) span residues 8–28, 36–56, and 68–88; these read TVGF…TLYT, LTII…MFMH, and FKVI…YWVM.

The protein belongs to the cytochrome c oxidase bacterial subunit 4 family.

The protein localises to the cell membrane. It carries out the reaction 2 a quinol + O2 = 2 a quinone + 2 H2O. Functionally, catalyzes quinol oxidation with the concomitant reduction of oxygen to water. This Staphylococcus aureus (strain USA300) protein is Probable quinol oxidase subunit 4 (qoxD).